Here is a 122-residue protein sequence, read N- to C-terminus: Large ribosomal subunit protein uL18 (122 aa).

It belongs to the universal ribosomal protein uL18 family. As to quaternary structure, part of the 50S ribosomal subunit; part of the 5S rRNA/L5/L18/L25 subcomplex. Contacts the 5S and 23S rRNAs.

Its function is as follows. This is one of the proteins that bind and probably mediate the attachment of the 5S RNA into the large ribosomal subunit, where it forms part of the central protuberance. This is Large ribosomal subunit protein uL18 from Ruminiclostridium cellulolyticum (strain ATCC 35319 / DSM 5812 / JCM 6584 / H10) (Clostridium cellulolyticum).